The primary structure comprises 151 residues: Ribosome maturation factor RimP (151 aa).

The protein belongs to the RimP family.

It is found in the cytoplasm. Its function is as follows. Required for maturation of 30S ribosomal subunits. The sequence is that of Ribosome maturation factor RimP from Nitrosococcus oceani (strain ATCC 19707 / BCRC 17464 / JCM 30415 / NCIMB 11848 / C-107).